Reading from the N-terminus, the 365-residue chain is Protein YIM1 (365 aa).

This sequence belongs to the YIM1 family.

The protein resides in the lipid droplet. The protein localises to the mitochondrion. This Saccharomyces cerevisiae (strain ATCC 204508 / S288c) (Baker's yeast) protein is Protein YIM1 (YIM1).